Reading from the N-terminus, the 198-residue chain is Recombination protein RecR (198 aa).

Residues 57 to 72 (CSICGNLTDDDPCHIC) form a C4-type zinc finger. In terms of domain architecture, Toprim spans 80–175 (TTILVVEDAK…KVTRLARGLA (96 aa)).

It belongs to the RecR family.

Functionally, may play a role in DNA repair. It seems to be involved in an RecBC-independent recombinational process of DNA repair. It may act with RecF and RecO. In Streptococcus pyogenes serotype M5 (strain Manfredo), this protein is Recombination protein RecR.